The primary structure comprises 400 residues: Subtilisin-like protease 1 (400 aa).

The first 20 residues, 1–20 (MKFSQSLIALAACFLPLIAA), serve as a signal peptide directing secretion. The propeptide occupies 21 to 119 (APVEAQHAKI…IEMDGKVQAN (99 aa)). The region spanning 42-117 (SYIVVFNKGV…AWIEMDGKVQ (76 aa)) is the Inhibitor I9 domain. N-linked (GlcNAc...) asparagine glycosylation occurs at asparagine 82. The Peptidase S8 domain occupies 128–400 (TWGLGRISHK…NLIAYNGNGA (273 aa)). Residues aspartate 160, histidine 192, and serine 345 each act as charge relay system in the active site.

Belongs to the peptidase S8 family.

It is found in the secreted. Functionally, major secreted subtilisin-like serine endopeptidase. Mediates the degradation of collagen, the major structural protein in the mammalian host. Degrades the nonhelical regions of collagen that function in the cross-linking of the helical components. May function as virulence factor involved in epidermal wing necrosis observed in white nose syndrome (WNS) in bats. This chain is Subtilisin-like protease 1, found in Pseudogymnoascus destructans (strain ATCC MYA-4855 / 20631-21) (Bat white-nose syndrome fungus).